Reading from the N-terminus, the 495-residue chain is UDP-N-acetylmuramoyl-L-alanyl-D-glutamate--2,6-diaminopimelate ligase (495 aa).

UDP-N-acetyl-alpha-D-muramoyl-L-alanyl-D-glutamate is bound by residues Leu-27, Ser-29, and 44–46 (HQT). Residue 116-122 (GTNGKTT) participates in ATP binding. UDP-N-acetyl-alpha-D-muramoyl-L-alanyl-D-glutamate-binding positions include Asn-157, 158–159 (TT), Ser-185, Gln-191, and Arg-193. Position 225 is an N6-carboxylysine (Lys-225). Meso-2,6-diaminopimelate-binding positions include Arg-390, 414-417 (DNPR), Gly-465, and Glu-469. Residues 414–417 (DNPR) carry the Meso-diaminopimelate recognition motif motif.

The protein belongs to the MurCDEF family. MurE subfamily. Mg(2+) is required as a cofactor. Carboxylation is probably crucial for Mg(2+) binding and, consequently, for the gamma-phosphate positioning of ATP.

Its subcellular location is the cytoplasm. The enzyme catalyses UDP-N-acetyl-alpha-D-muramoyl-L-alanyl-D-glutamate + meso-2,6-diaminopimelate + ATP = UDP-N-acetyl-alpha-D-muramoyl-L-alanyl-gamma-D-glutamyl-meso-2,6-diaminopimelate + ADP + phosphate + H(+). It participates in cell wall biogenesis; peptidoglycan biosynthesis. In terms of biological role, catalyzes the addition of meso-diaminopimelic acid to the nucleotide precursor UDP-N-acetylmuramoyl-L-alanyl-D-glutamate (UMAG) in the biosynthesis of bacterial cell-wall peptidoglycan. The polypeptide is UDP-N-acetylmuramoyl-L-alanyl-D-glutamate--2,6-diaminopimelate ligase (Photorhabdus laumondii subsp. laumondii (strain DSM 15139 / CIP 105565 / TT01) (Photorhabdus luminescens subsp. laumondii)).